A 318-amino-acid chain; its full sequence is Phospho-N-acetylmuramoyl-pentapeptide-transferase (318 aa).

The next 10 membrane-spanning stretches (helical) occupy residues 5-25, 50-70, 71-91, 115-135, 139-159, 173-193, 198-218, 222-242, 248-268, and 298-318; these read LKPL…VLAF, PTMG…VLAP, PSPL…IGLV, VLLG…GSVI, VTGW…LLLV, GLAA…ALTL, LVTF…YNFH, VFMG…LAIM, VLPV…LQVV, and VLFF…LLTI.

Belongs to the glycosyltransferase 4 family. MraY subfamily. Requires Mg(2+) as cofactor.

The protein resides in the cell membrane. The enzyme catalyses UDP-N-acetyl-alpha-D-muramoyl-L-alanyl-gamma-D-glutamyl-meso-2,6-diaminopimeloyl-D-alanyl-D-alanine + di-trans,octa-cis-undecaprenyl phosphate = di-trans,octa-cis-undecaprenyl diphospho-N-acetyl-alpha-D-muramoyl-L-alanyl-D-glutamyl-meso-2,6-diaminopimeloyl-D-alanyl-D-alanine + UMP. The protein operates within cell wall biogenesis; peptidoglycan biosynthesis. Functionally, catalyzes the initial step of the lipid cycle reactions in the biosynthesis of the cell wall peptidoglycan: transfers peptidoglycan precursor phospho-MurNAc-pentapeptide from UDP-MurNAc-pentapeptide onto the lipid carrier undecaprenyl phosphate, yielding undecaprenyl-pyrophosphoryl-MurNAc-pentapeptide, known as lipid I. The polypeptide is Phospho-N-acetylmuramoyl-pentapeptide-transferase (Moorella thermoacetica (strain ATCC 39073 / JCM 9320)).